A 144-amino-acid polypeptide reads, in one-letter code: Large ribosomal subunit protein uL15 (144 aa).

The disordered stretch occupies residues 1–52 (MRLNTLSPAEGAKHAPKRVGRGIGSGLGKTGGRGHKGQKSRSGGGVRRGFEG). Residues 21 to 31 (RGIGSGLGKTG) show a composition bias toward gly residues.

It belongs to the universal ribosomal protein uL15 family. As to quaternary structure, part of the 50S ribosomal subunit.

Its function is as follows. Binds to the 23S rRNA. The sequence is that of Large ribosomal subunit protein uL15 from Buchnera aphidicola subsp. Acyrthosiphon kondoi (Acyrthosiphon kondoi symbiotic bacterium).